Reading from the N-terminus, the 178-residue chain is Transcriptional repressor NrdR (178 aa).

Residues Met1 to Asp21 form a disordered region. A zinc finger spans residues Cys3 to Cys34. Over residues Gly7–Asp21 the composition is skewed to basic and acidic residues. In terms of domain architecture, ATP-cone spans Leu49–Asp139.

It belongs to the NrdR family. Zn(2+) serves as cofactor.

Its function is as follows. Negatively regulates transcription of bacterial ribonucleotide reductase nrd genes and operons by binding to NrdR-boxes. This chain is Transcriptional repressor NrdR, found in Gluconacetobacter diazotrophicus (strain ATCC 49037 / DSM 5601 / CCUG 37298 / CIP 103539 / LMG 7603 / PAl5).